The following is a 454-amino-acid chain: MNINEPRDGGGFVLPFFNDSKKSRKSHAGRDSLKSNRVPFTKWVPDTVSYTTKPLKNAHRWLHLHNKTRNHFVATVAEFAGTTLFLFFAFSGTQVALLATPANDSNVVGTPSNPAQLLYVSLCFGFSLAVNAWVFFRISGGLFNPAVTMGMCIVGALPYFRGLLLIFAQIIGGIAAAAIVSALFPGPITFRTSLGGGTSIVQGLFIEMFLTAELVFTIFMLAAEKHKGTFIAPIGIGLSLFIAELTGVYFTGGSVNPARSFGPSVVSGQFTGYHWIYWVGPILGAILASAFYKFIKMLEYETANPGQDAGRVGEVIDPEAQAIKNRVSFASEGLVGRELDESGASHVHENGNHFGAPKEYGTKRRPFSDSPAPPNANDQFAGLSEGGLHTDEFANENIGGGHSGEGAMHRNKRDSEGTLVGNGKKGVLKVGAGGTGGAAVGSTNENLRDNTHNN.

The Cytoplasmic segment spans residues 1–71; it reads MNINEPRDGG…LHLHNKTRNH (71 aa). The helical transmembrane segment at 72 to 92 threads the bilayer; the sequence is FVATVAEFAGTTLFLFFAFSG. Residues 93-115 are Extracellular-facing; it reads TQVALLATPANDSNVVGTPSNPA. N-linked (GlcNAc...) asparagine glycosylation occurs at Asn103. Residues 116 to 136 form a helical membrane-spanning segment; sequence QLLYVSLCFGFSLAVNAWVFF. Residues 137–163 lie on the Cytoplasmic side of the membrane; the sequence is RISGGLFNPAVTMGMCIVGALPYFRGL. The NPA 1 motif lies at 144–146; that stretch reads NPA. A helical membrane pass occupies residues 164–184; that stretch reads LLIFAQIIGGIAAAAIVSALF. The Extracellular segment spans residues 185–202; sequence PGPITFRTSLGGGTSIVQ. The chain crosses the membrane as a helical span at residues 203 to 223; it reads GLFIEMFLTAELVFTIFMLAA. At 224–229 the chain is on the cytoplasmic side; the sequence is EKHKGT. The chain crosses the membrane as a helical span at residues 230 to 250; that stretch reads FIAPIGIGLSLFIAELTGVYF. The Extracellular portion of the chain corresponds to 251–274; it reads TGGSVNPARSFGPSVVSGQFTGYH. The NPA 2 motif lies at 256-258; the sequence is NPA. The helical transmembrane segment at 275-295 threads the bilayer; it reads WIYWVGPILGAILASAFYKFI. The Cytoplasmic portion of the chain corresponds to 296–454; sequence KMLEYETANP…ENLRDNTHNN (159 aa). The segment at 343-454 is disordered; it reads GASHVHENGN…ENLRDNTHNN (112 aa).

This sequence belongs to the MIP/aquaporin (TC 1.A.8) family.

The protein resides in the membrane. The enzyme catalyses H2O(in) = H2O(out). Water channel required to facilitate the transport of water across membranes. Involved in conidiation. This is Aquaporin-7 from Botryotinia fuckeliana (strain B05.10) (Noble rot fungus).